Consider the following 229-residue polypeptide: Lipoprotein-releasing system ATP-binding protein LolD (229 aa).

One can recognise an ABC transporter domain in the interval 6-229 (LELDAIERTY…DGHLTPYVPA (224 aa)). Residue 42-49 (GPSGSGKS) coordinates ATP.

Belongs to the ABC transporter superfamily. Lipoprotein translocase (TC 3.A.1.125) family. As to quaternary structure, the complex is composed of two ATP-binding proteins (LolD) and two transmembrane proteins (LolC and LolE).

Its subcellular location is the cell inner membrane. In terms of biological role, part of the ABC transporter complex LolCDE involved in the translocation of mature outer membrane-directed lipoproteins, from the inner membrane to the periplasmic chaperone, LolA. Responsible for the formation of the LolA-lipoprotein complex in an ATP-dependent manner. The protein is Lipoprotein-releasing system ATP-binding protein LolD of Maricaulis maris (strain MCS10) (Caulobacter maris).